The primary structure comprises 485 residues: CCA-adding enzyme (485 aa).

Residues Ser-53 and Arg-56 each coordinate ATP. The CTP site is built by Ser-53 and Arg-56. Residues Asp-65, Asp-67, and Asp-124 each coordinate Mg(2+). Positions 146, 164, and 173 each coordinate ATP. CTP-binding residues include His-146, Lys-164, and Tyr-173.

Belongs to the tRNA nucleotidyltransferase/poly(A) polymerase family. Archaeal CCA-adding enzyme subfamily. As to quaternary structure, homodimer. Mg(2+) serves as cofactor.

It carries out the reaction a tRNA precursor + 2 CTP + ATP = a tRNA with a 3' CCA end + 3 diphosphate. The catalysed reaction is a tRNA with a 3' CCA end + 2 CTP + ATP = a tRNA with a 3' CCACCA end + 3 diphosphate. In terms of biological role, catalyzes the addition and repair of the essential 3'-terminal CCA sequence in tRNAs without using a nucleic acid template. Adds these three nucleotides in the order of C, C, and A to the tRNA nucleotide-73, using CTP and ATP as substrates and producing inorganic pyrophosphate. tRNA 3'-terminal CCA addition is required both for tRNA processing and repair. Also involved in tRNA surveillance by mediating tandem CCA addition to generate a CCACCA at the 3' terminus of unstable tRNAs. While stable tRNAs receive only 3'-terminal CCA, unstable tRNAs are marked with CCACCA and rapidly degraded. In Methanopyrus kandleri (strain AV19 / DSM 6324 / JCM 9639 / NBRC 100938), this protein is CCA-adding enzyme.